The chain runs to 90 residues: Acylphosphatase (90 aa).

The region spanning 3–90 (KKQFIVYGLV…REFTDFSVRY (88 aa)) is the Acylphosphatase-like domain. Catalysis depends on residues R18 and N36.

This sequence belongs to the acylphosphatase family.

It carries out the reaction an acyl phosphate + H2O = a carboxylate + phosphate + H(+). The sequence is that of Acylphosphatase (acyP) from Pasteurella multocida (strain Pm70).